We begin with the raw amino-acid sequence, 99 residues long: Aspartyl/glutamyl-tRNA(Asn/Gln) amidotransferase subunit C (99 aa).

The protein belongs to the GatC family. In terms of assembly, heterotrimer of A, B and C subunits.

It catalyses the reaction L-glutamyl-tRNA(Gln) + L-glutamine + ATP + H2O = L-glutaminyl-tRNA(Gln) + L-glutamate + ADP + phosphate + H(+). It carries out the reaction L-aspartyl-tRNA(Asn) + L-glutamine + ATP + H2O = L-asparaginyl-tRNA(Asn) + L-glutamate + ADP + phosphate + 2 H(+). Its function is as follows. Allows the formation of correctly charged Asn-tRNA(Asn) or Gln-tRNA(Gln) through the transamidation of misacylated Asp-tRNA(Asn) or Glu-tRNA(Gln) in organisms which lack either or both of asparaginyl-tRNA or glutaminyl-tRNA synthetases. The reaction takes place in the presence of glutamine and ATP through an activated phospho-Asp-tRNA(Asn) or phospho-Glu-tRNA(Gln). This Mycobacterium leprae (strain Br4923) protein is Aspartyl/glutamyl-tRNA(Asn/Gln) amidotransferase subunit C.